Reading from the N-terminus, the 259-residue chain is tRNA (guanine-N(1)-)-methyltransferase (259 aa).

Residues Gly-117 and 137-142 (LGDFVL) contribute to the S-adenosyl-L-methionine site.

It belongs to the RNA methyltransferase TrmD family. In terms of assembly, homodimer.

The protein resides in the cytoplasm. It carries out the reaction guanosine(37) in tRNA + S-adenosyl-L-methionine = N(1)-methylguanosine(37) in tRNA + S-adenosyl-L-homocysteine + H(+). Its function is as follows. Specifically methylates guanosine-37 in various tRNAs. This is tRNA (guanine-N(1)-)-methyltransferase from Polaromonas sp. (strain JS666 / ATCC BAA-500).